A 358-amino-acid polypeptide reads, in one-letter code: uncharacterized protein (358 aa).

Positions 39, 61, 92, 95, 98, 106, and 157 each coordinate Zn(2+).

The protein belongs to the zinc-containing alcohol dehydrogenase family. Zn(2+) serves as cofactor.

This is an uncharacterized protein from Escherichia coli (strain K12).